The following is a 363-amino-acid chain: Ataxin-3 (363 aa).

The Josephin domain maps to 1–180; sequence MESIFHERQE…DCEADQLLQM (180 aa). C14 serves as the catalytic Nucleophile. H119 acts as the Proton acceptor in catalysis. Residue N134 is part of the active site. Positions 192-209 are enriched in basic and acidic residues; sequence IGEETAQSRDQRLPRSDV. The interval 192-212 is disordered; that stretch reads IGEETAQSRDQRLPRSDVDQA. 3 consecutive UIM domains span residues 227-246, 247-266, and 337-356; these read EDEE…IDME, DEEA…SRQS, and SEED…ARNH. A compositionally biased stretch (polar residues) spans 260–290; the sequence is MQGSRQSEFSNSLPQNASQPPHTSQTDSLSS. The disordered stretch occupies residues 260 to 363; that stretch reads MQGSRQSEFS…RNHLSTEEKK (104 aa). Residues 353 to 363 are compositionally biased toward basic and acidic residues; the sequence is ARNHLSTEEKK.

Widely expressed.

The protein resides in the nucleus matrix. The protein localises to the nucleus. It localises to the lysosome membrane. It catalyses the reaction Thiol-dependent hydrolysis of ester, thioester, amide, peptide and isopeptide bonds formed by the C-terminal Gly of ubiquitin (a 76-residue protein attached to proteins as an intracellular targeting signal).. Deubiquitinating enzyme involved in protein homeostasis maintenance, transcription, cytoskeleton regulation, myogenesis and degradation of misfolded chaperone substrates. Binds long polyubiquitin chains and trims them, while it has weak or no activity against chains of 4 or less ubiquitins. Involved in degradation of misfolded chaperone substrates via its interaction with STUB1/CHIP: recruited to monoubiquitinated STUB1/CHIP, and restricts the length of ubiquitin chain attached to STUB1/CHIP substrates and preventing further chain extension. Interacts with key regulators of transcription and represses transcription: acts as a histone-binding protein that regulates transcription. Acts as a negative regulator of mTORC1 signaling in response to amino acid deprivation by mediating deubiquitination of RHEB, thereby promoting RHEB inactivation by the TSC-TBC complex. Regulates autophagy via the deubiquitination of 'Lys-402' of BECN1 leading to the stabilization of BECN1. The protein is Ataxin-3 (ATXN3) of Gallus gallus (Chicken).